Consider the following 1353-residue polypeptide: Trifunctional purine biosynthetic protein adenosine-3 (1353 aa).

In terms of domain architecture, ATP-grasp spans 114–321 (KDFMLRHGIP…LFDVMEACCS (208 aa)). Residues 193 to 196 (EELL), E200, R223, and N232 contribute to the ATP site. Mg(2+) contacts are provided by E291 and N293. The segment at 441–1155 (GLSYKDSGVD…QKMLSQRRKR (715 aa)) is AIRS domain. A phosphoserine mark is found at S814 and S816. Residues 1153–1353 (RKRVAVLISG…ALISPEVSSQ (201 aa)) form a GART domain region. N(1)-(5-phospho-beta-D-ribosyl)glycinamide is bound at residue 1164–1166 (GSN). Residues R1219, 1244-1247 (MRVL), and N1261 each bind (6R)-10-formyltetrahydrofolate. Residue H1263 is the Proton donor of the active site. 1295–1299 (DEGVD) serves as a coordination point for (6R)-10-formyltetrahydrofolate. N(1)-(5-phospho-beta-D-ribosyl)glycinamide is bound at residue 1325–1328 (HKAE).

In the N-terminal section; belongs to the GARS family. The protein in the central section; belongs to the AIR synthase family. This sequence in the C-terminal section; belongs to the GART family. As to quaternary structure, homodimer. The cofactor is Mg(2+). Requires Mn(2+) as cofactor.

The enzyme catalyses 5-phospho-beta-D-ribosylamine + glycine + ATP = N(1)-(5-phospho-beta-D-ribosyl)glycinamide + ADP + phosphate + H(+). It catalyses the reaction 2-formamido-N(1)-(5-O-phospho-beta-D-ribosyl)acetamidine + ATP = 5-amino-1-(5-phospho-beta-D-ribosyl)imidazole + ADP + phosphate + H(+). It carries out the reaction N(1)-(5-phospho-beta-D-ribosyl)glycinamide + (6R)-10-formyltetrahydrofolate = N(2)-formyl-N(1)-(5-phospho-beta-D-ribosyl)glycinamide + (6S)-5,6,7,8-tetrahydrofolate + H(+). It participates in purine metabolism; IMP biosynthesis via de novo pathway; 5-amino-1-(5-phospho-D-ribosyl)imidazole from N(2)-formyl-N(1)-(5-phospho-D-ribosyl)glycinamide: step 2/2. The protein operates within purine metabolism; IMP biosynthesis via de novo pathway; N(1)-(5-phospho-D-ribosyl)glycinamide from 5-phospho-alpha-D-ribose 1-diphosphate: step 2/2. It functions in the pathway purine metabolism; IMP biosynthesis via de novo pathway; N(2)-formyl-N(1)-(5-phospho-D-ribosyl)glycinamide from N(1)-(5-phospho-D-ribosyl)glycinamide (10-formyl THF route): step 1/1. Trifunctional enzyme that catalyzes three distinct reactions as part of the 'de novo' inosine monophosphate biosynthetic pathway. The chain is Trifunctional purine biosynthetic protein adenosine-3 from Drosophila melanogaster (Fruit fly).